Here is a 102-residue protein sequence, read N- to C-terminus: uncharacterized protein (102 aa).

The segment at 77-102 (RKDGDEKSKPNSKDYASRPIRDHSKI) is disordered.

This is an uncharacterized protein from Microplitis demolitor (Parasitoid wasp).